The primary structure comprises 268 residues: Ribosomal RNA small subunit methyltransferase A (268 aa).

The S-adenosyl-L-methionine site is built by Asn18, Leu20, Gly45, Glu66, Asp91, and Asn112.

The protein belongs to the class I-like SAM-binding methyltransferase superfamily. rRNA adenine N(6)-methyltransferase family. RsmA subfamily.

It is found in the cytoplasm. The catalysed reaction is adenosine(1518)/adenosine(1519) in 16S rRNA + 4 S-adenosyl-L-methionine = N(6)-dimethyladenosine(1518)/N(6)-dimethyladenosine(1519) in 16S rRNA + 4 S-adenosyl-L-homocysteine + 4 H(+). Its function is as follows. Specifically dimethylates two adjacent adenosines (A1518 and A1519) in the loop of a conserved hairpin near the 3'-end of 16S rRNA in the 30S particle. May play a critical role in biogenesis of 30S subunits. The chain is Ribosomal RNA small subunit methyltransferase A from Shewanella frigidimarina (strain NCIMB 400).